Reading from the N-terminus, the 130-residue chain is MAAASFYGTGKRKSSIARVWLKPGTGVITVNHKTLDEYFGRETSKMVVKQPLELTENMGKFDIYVTVCGGGDSGQAGAIKHGITKALLEVDAALRGTLKKAGFVTRDSRIKERKKYGKKAARASFQFSKR.

It belongs to the universal ribosomal protein uS9 family.

The polypeptide is Small ribosomal subunit protein uS9 (Geotalea uraniireducens (strain Rf4) (Geobacter uraniireducens)).